Consider the following 349-residue polypeptide: Bifunctional nitrilase/nitrile hydratase NIT4A (349 aa).

Positions 29-301 (VRATVVQAST…EALISADLDL (273 aa)) constitute a CN hydrolase domain. The active-site Proton acceptor is the Glu69. The Proton donor role is filled by Lys156. Cys190 functions as the Nucleophile in the catalytic mechanism.

The protein belongs to the carbon-nitrogen hydrolase superfamily. Nitrilase family. As to expression, expressed in roots, stems, cotyledons, leaves and flowers.

Its subcellular location is the cell membrane. It catalyses the reaction a nitrile + 2 H2O = a carboxylate + NH4(+). The catalysed reaction is 3-cyano-L-alanine + 2 H2O = L-aspartate + NH4(+). It carries out the reaction L-asparagine = 3-cyano-L-alanine + H2O. Functionally, highly specific for beta-cyano-L-alanine (Ala(CN)). Low activity with 3-phenylpropionitrile (PPN). Not associated with auxin production but may be involved in cyanide detoxification. In Nicotiana tabacum (Common tobacco), this protein is Bifunctional nitrilase/nitrile hydratase NIT4A (NIT4A).